We begin with the raw amino-acid sequence, 115 residues long: Hydrogenase maturation factor HypA (115 aa).

His2 is a binding site for Ni(2+). Residues Cys74, Cys77, Cys90, and Cys93 each contribute to the Zn(2+) site.

This sequence belongs to the HypA/HybF family.

Its function is as follows. Involved in the maturation of [NiFe] hydrogenases. Required for nickel insertion into the metal center of the hydrogenase. This Desulfosudis oleivorans (strain DSM 6200 / JCM 39069 / Hxd3) (Desulfococcus oleovorans) protein is Hydrogenase maturation factor HypA.